Reading from the N-terminus, the 149-residue chain is MVDSLTEEQIAEFKEAFSLFDKDGDGNITTKELGTVMRSLGQNPTEAELQDMINEVDADGNGTIDFPEFLTMMARKMADTDTEEEIREAFKVFDKDGNGFISAAELRHVMTNLGEKLSDEEVDEMIREADVDGDGQVNYDEFVKMMLSK.

4 EF-hand domains span residues 8–43, 44–79, 81–116, and 117–149; these read EQIA…LGQN, PTEA…KMAD, DTEE…LGEK, and LSDE…MLSK. Ca(2+) contacts are provided by Asp-21, Asp-23, Asp-25, Asn-27, Glu-32, Asp-57, Asp-59, Asn-61, Thr-63, Glu-68, Asp-94, Asp-96, Asn-98, and Glu-105. Residue Lys-116 is modified to N6,N6,N6-trimethyllysine. Ca(2+) contacts are provided by Asp-130, Asp-132, Asp-134, Gln-136, and Glu-141.

The protein belongs to the calmodulin family.

Its function is as follows. Calmodulin mediates the control of a large number of enzymes, ion channels and other proteins by Ca(2+). Among the enzymes to be stimulated by the calmodulin-Ca(2+) complex are a number of protein kinases and phosphatases. The chain is Calmodulin from Physarum polycephalum (Slime mold).